The following is a 1404-amino-acid chain: DNA-directed RNA polymerase subunit beta' (1404 aa).

4 residues coordinate Zn(2+): cysteine 70, cysteine 72, cysteine 85, and cysteine 88. Mg(2+) is bound by residues aspartate 460, aspartate 462, and aspartate 464. The Zn(2+) site is built by cysteine 814, cysteine 889, cysteine 896, and cysteine 899.

The protein belongs to the RNA polymerase beta' chain family. As to quaternary structure, the RNAP catalytic core consists of 2 alpha, 1 beta, 1 beta' and 1 omega subunit. When a sigma factor is associated with the core the holoenzyme is formed, which can initiate transcription. Mg(2+) serves as cofactor. Zn(2+) is required as a cofactor.

The enzyme catalyses RNA(n) + a ribonucleoside 5'-triphosphate = RNA(n+1) + diphosphate. DNA-dependent RNA polymerase catalyzes the transcription of DNA into RNA using the four ribonucleoside triphosphates as substrates. The polypeptide is DNA-directed RNA polymerase subunit beta' (Xanthomonas axonopodis pv. citri (strain 306)).